Consider the following 495-residue polypeptide: Phosphomethylpyrimidine synthase (495 aa).

Substrate-binding positions include asparagine 125, methionine 154, tyrosine 183, histidine 219, 239 to 241 (SRG), 280 to 283 (DGLR), and glutamate 319. Residue histidine 323 participates in Zn(2+) binding. Tyrosine 346 contacts substrate. Position 387 (histidine 387) interacts with Zn(2+). Positions 467, 470, and 475 each coordinate [4Fe-4S] cluster.

It belongs to the ThiC family. Requires [4Fe-4S] cluster as cofactor.

The catalysed reaction is 5-amino-1-(5-phospho-beta-D-ribosyl)imidazole + S-adenosyl-L-methionine = 4-amino-2-methyl-5-(phosphooxymethyl)pyrimidine + CO + 5'-deoxyadenosine + formate + L-methionine + 3 H(+). The protein operates within cofactor biosynthesis; thiamine diphosphate biosynthesis. Functionally, catalyzes the synthesis of the hydroxymethylpyrimidine phosphate (HMP-P) moiety of thiamine from aminoimidazole ribotide (AIR) in a radical S-adenosyl-L-methionine (SAM)-dependent reaction. The sequence is that of Phosphomethylpyrimidine synthase from Leptospira interrogans serogroup Icterohaemorrhagiae serovar Lai (strain 56601).